The following is a 519-amino-acid chain: U3 small nucleolar RNA-associated protein 15 homolog (519 aa).

Alanine 2 carries the N-acetylalanine modification. WD repeat units follow at residues 36-75 (KEFG…PIKT), 78-117 (RFKD…PLRQ), 120-159 (GHTK…EILT), 162-202 (EHSD…SVIS), 204-242 (EHGQ…QLLV), 246-285 (NHHK…VVHS), and 287-326 (DYTA…KKDS). Lysine 249 participates in a covalent cross-link: Glycyl lysine isopeptide (Lys-Gly) (interchain with G-Cter in SUMO2).

In terms of assembly, part of the small subunit (SSU) processome, composed of more than 70 proteins and the RNA chaperone small nucleolar RNA (snoRNA) U3. May be a component of the proposed t-UTP subcomplex of the ribosomal small subunit (SSU) processome containing at least UTP4, WDR43, HEATR1, UTP15, WDR75. Interacts directly with UTP4 and WDR43.

The protein resides in the nucleus. The protein localises to the nucleolus. In terms of biological role, ribosome biogenesis factor. Involved in nucleolar processing of pre-18S ribosomal RNA. Required for optimal pre-ribosomal RNA transcription by RNA polymerase I. Part of the small subunit (SSU) processome, first precursor of the small eukaryotic ribosomal subunit. During the assembly of the SSU processome in the nucleolus, many ribosome biogenesis factors, an RNA chaperone and ribosomal proteins associate with the nascent pre-rRNA and work in concert to generate RNA folding, modifications, rearrangements and cleavage as well as targeted degradation of pre-ribosomal RNA by the RNA exosome. This is U3 small nucleolar RNA-associated protein 15 homolog from Bos taurus (Bovine).